The chain runs to 746 residues: Quiannulatene synthase (746 aa).

The tract at residues 1 to 336 (MASEVIVISD…SRYPTKTELN (336 aa)) is sesterterpenoid synthase. D95 provides a ligand contact to Mg(2+). Residues 338–746 (PEVIIVDGEL…VELMLRRLWV (409 aa)) form a geranylfarnesyl diphosphate synthase region. Isopentenyl diphosphate is bound by residues K465, R468, and H497. D504 and D508 together coordinate Mg(2+). Residue R513 participates in dimethylallyl diphosphate binding. R514 lines the isopentenyl diphosphate pocket. Dimethylallyl diphosphate is bound by residues K591, T592, Q628, N635, and K645.

The protein in the N-terminal section; belongs to the terpene synthase family. This sequence in the C-terminal section; belongs to the FPP/GGPP synthase family. The cofactor is Mg(2+).

It catalyses the reaction isopentenyl diphosphate + (2E,6E)-farnesyl diphosphate = (2E,6E,10E)-geranylgeranyl diphosphate + diphosphate. The catalysed reaction is (2E,6E,10E,14E)-geranylfarnesyl diphosphate = quiannulatene + diphosphate. Its pathway is secondary metabolite biosynthesis; terpenoid biosynthesis. Its function is as follows. Bifunctional sesterterpene synthase; part of the gene cluster that mediates the biosynthesis of the pentacyclic sesterterpene quiannulatic acid. The first step of the pathway is performed by the sesterterpene synthase (QS) that possesses both prenyl transferase and terpene cyclase activity, converting isopentenyl diphosphate and dimethylallyl diphosphate into geranylfarnesyl diphosphate (GFPP) and further converting GFPP into quiannulatene via an unprecedented cyclization mode which involves three rounds of hydride shifts and two successive C-C bond migrations to construct the 5-6-5-5-5 fused ring. The cytochrome P450 monooxygenase Qnn-P450 then oxidizes quiannulatene at C-19 in 3 successive reactions to afford quiannulatic acid. The chain is Quiannulatene synthase from Emericella variicolor (Aspergillus stellatus).